We begin with the raw amino-acid sequence, 96 residues long: Pyrimidine/purine nucleoside phosphorylase (96 aa).

It belongs to the nucleoside phosphorylase PpnP family.

It catalyses the reaction a purine D-ribonucleoside + phosphate = a purine nucleobase + alpha-D-ribose 1-phosphate. It carries out the reaction adenosine + phosphate = alpha-D-ribose 1-phosphate + adenine. The enzyme catalyses cytidine + phosphate = cytosine + alpha-D-ribose 1-phosphate. The catalysed reaction is guanosine + phosphate = alpha-D-ribose 1-phosphate + guanine. It catalyses the reaction inosine + phosphate = alpha-D-ribose 1-phosphate + hypoxanthine. It carries out the reaction thymidine + phosphate = 2-deoxy-alpha-D-ribose 1-phosphate + thymine. The enzyme catalyses uridine + phosphate = alpha-D-ribose 1-phosphate + uracil. The catalysed reaction is xanthosine + phosphate = alpha-D-ribose 1-phosphate + xanthine. Catalyzes the phosphorolysis of diverse nucleosides, yielding D-ribose 1-phosphate and the respective free bases. Can use uridine, adenosine, guanosine, cytidine, thymidine, inosine and xanthosine as substrates. Also catalyzes the reverse reactions. This Serratia proteamaculans (strain 568) protein is Pyrimidine/purine nucleoside phosphorylase.